Consider the following 353-residue polypeptide: tRNA N6-adenosine threonylcarbamoyltransferase (353 aa).

Residues H111 and H115 each coordinate Fe cation. Substrate-binding positions include 148–152 (LVSGG), D181, G194, and N286. D314 is a Fe cation binding site.

This sequence belongs to the KAE1 / TsaD family. Fe(2+) is required as a cofactor.

The protein localises to the cytoplasm. It carries out the reaction L-threonylcarbamoyladenylate + adenosine(37) in tRNA = N(6)-L-threonylcarbamoyladenosine(37) in tRNA + AMP + H(+). In terms of biological role, required for the formation of a threonylcarbamoyl group on adenosine at position 37 (t(6)A37) in tRNAs that read codons beginning with adenine. Is involved in the transfer of the threonylcarbamoyl moiety of threonylcarbamoyl-AMP (TC-AMP) to the N6 group of A37, together with TsaE and TsaB. TsaD likely plays a direct catalytic role in this reaction. The polypeptide is tRNA N6-adenosine threonylcarbamoyltransferase (Blochmanniella floridana).